The sequence spans 411 residues: 6-hydroxytryprostatin B O-methyltransferase (411 aa).

D270 serves as a coordination point for S-adenosyl-L-methionine. Residue H313 is the Proton acceptor of the active site.

This sequence belongs to the class I-like SAM-binding methyltransferase superfamily. Cation-independent O-methyltransferase family. In terms of assembly, homodimer.

The enzyme catalyses 6-hydroxytryprostatin B + S-adenosyl-L-methionine = tryprostatin A + S-adenosyl-L-homocysteine + H(+). It functions in the pathway alkaloid biosynthesis. Functionally, 6-hydroxytryprostatin B O-methyltransferase; part of the gene cluster that mediates the biosynthesis of fumitremorgins, indole alkaloids that carry not only intriguing chemical structures, but also interesting biological and pharmacological activities. The biosynthesis of fumitremorgin-type alkaloids begins by condensation of the two amino acids L-tryptophan and L-proline to brevianamide F, catalyzed by the non-ribosomal peptide synthetase ftmPS/ftmA. Brevianamide F is then prenylated by the prenyltransferase ftmPT1/ftmB in the presence of dimethylallyl diphosphate, resulting in the formation of tryprostatin B. The three cytochrome P450 monooxygenases, ftmP450-1/ftmC, ftmP450-2/ftmE and ftmP450-3/FtmG, are responsible for the conversion of tryprostatin B to 6-hydroxytryprostatin B, tryprostatin A to fumitremorgin C and fumitremorgin C to 12,13-dihydroxyfumitremorgin C, respectively. The putative methyltransferase ftmMT/ftmD is expected for the conversion of 6-hydroxytryprostatin B to tryprostatin A. FtmPT2/FtmH catalyzes the prenylation of 12,13-dihydroxyfumitre-morgin C in the presence of dimethylallyl diphosphate, resulting in the formation of fumitremorgin B. Fumitremorgin B is further converted to verruculogen by ftmOx1/ftmF via the insertion of an endoperoxide bond between the two prenyl moieties. Finally, verruculogen is further converted to fumitremorgin A by the verruculogen prenyltransferase ftmPT3. The sequence is that of 6-hydroxytryprostatin B O-methyltransferase from Neosartorya fischeri (strain ATCC 1020 / DSM 3700 / CBS 544.65 / FGSC A1164 / JCM 1740 / NRRL 181 / WB 181) (Aspergillus fischerianus).